The following is a 582-amino-acid chain: MEETKYSSQQEIEGACGSDASLNARGSNDSPMGLSLYLCLASLTLVLFITALDILIVGTIIDVVAEQFGNYSKTGWLVTGYSLPNAILSLIWGRFASIIGFQHSLILAILIFEAGSLIAALASSMNMLIFGRVVAGVGGSGLQTLCFVIGCTMVGERSRPLVISILSCAFAVAAIVGPIIGGAFTTHVTWRWCFYINLPIGGLAIIMFLLTYKAENKGILQQIKDAIGTISSFTFSKFRHQVNFKRLMNGIIFKFDFFGFALCSAGLVLFLLGLTFGGNKYSWNSGQVITYLVLGVLLFIFSLVYDFFLFDKFNPEPDNISYRPLLLRRLVAKPAIIIVNMVTFLLCTGYNGQMIYSVQFFQLIFASSAWKAGLHLIPIVITNVIAAIASGVITKKLGLVKPLLIFGGVLGVIGAGLMTLMTNTSTKSTQIGVLLLPGFSLGFALQASLMSAQLQITKDRPEAAMDFIEVTAFNTFMKSLGTTLGGVLSTTVFSASFHNKVSRAHLEPYEGKTVDDMILYRLQNYDGSHSTIGNILSDSIKNVFWMDLGFYALGFLFCSFSSNKKLIIPKKDDTPEDNLEDK.

Residues 1 to 44 (MEETKYSSQQEIEGACGSDASLNARGSNDSPMGLSLYLCLASLT) lie on the Cytoplasmic side of the membrane. The helical transmembrane segment at 45 to 65 (LVLFITALDILIVGTIIDVVA) threads the bilayer. Residues 66–80 (EQFGNYSKTGWLVTG) lie on the Vacuolar side of the membrane. Asn70 carries N-linked (GlcNAc...) asparagine glycosylation. A helical membrane pass occupies residues 81 to 101 (YSLPNAILSLIWGRFASIIGF). The Cytoplasmic segment spans residues 102–104 (QHS). The chain crosses the membrane as a helical span at residues 105-125 (LILAILIFEAGSLIAALASSM). Topologically, residues 126–132 (NMLIFGR) are vacuolar. Residues 133–153 (VVAGVGGSGLQTLCFVIGCTM) traverse the membrane as a helical segment. Topologically, residues 154–160 (VGERSRP) are cytoplasmic. Residues 161-181 (LVISILSCAFAVAAIVGPIIG) traverse the membrane as a helical segment. Over 182-191 (GAFTTHVTWR) the chain is Vacuolar. A helical membrane pass occupies residues 192 to 212 (WCFYINLPIGGLAIIMFLLTY). The Cytoplasmic segment spans residues 213 to 256 (KAENKGILQQIKDAIGTISSFTFSKFRHQVNFKRLMNGIIFKFD). A helical transmembrane segment spans residues 257–277 (FFGFALCSAGLVLFLLGLTFG). At 278-287 (GNKYSWNSGQ) the chain is on the vacuolar side. A helical membrane pass occupies residues 288–308 (VITYLVLGVLLFIFSLVYDFF). Over 309–329 (LFDKFNPEPDNISYRPLLLRR) the chain is Cytoplasmic. Residues 330–350 (LVAKPAIIIVNMVTFLLCTGY) form a helical membrane-spanning segment. Topologically, residues 351–372 (NGQMIYSVQFFQLIFASSAWKA) are vacuolar. The helical transmembrane segment at 373-393 (GLHLIPIVITNVIAAIASGVI) threads the bilayer. Over 394–401 (TKKLGLVK) the chain is Cytoplasmic. A helical transmembrane segment spans residues 402–422 (PLLIFGGVLGVIGAGLMTLMT). N-linked (GlcNAc...) asparagine glycosylation occurs at Asn423. The Vacuolar segment spans residues 423–430 (NTSTKSTQ). A helical transmembrane segment spans residues 431-451 (IGVLLLPGFSLGFALQASLMS). Residues 452–469 (AQLQITKDRPEAAMDFIE) are Cytoplasmic-facing. Residues 470–492 (VTAFNTFMKSLGTTLGGVLSTTV) form a helical membrane-spanning segment. At 493 to 539 (FSASFHNKVSRAHLEPYEGKTVDDMILYRLQNYDGSHSTIGNILSDS) the chain is on the vacuolar side. A helical transmembrane segment spans residues 540–560 (IKNVFWMDLGFYALGFLFCSF). The Cytoplasmic portion of the chain corresponds to 561-582 (SSNKKLIIPKKDDTPEDNLEDK).

The protein belongs to the major facilitator superfamily.

Its subcellular location is the vacuole membrane. In terms of biological role, transporter required for vacuolar uptake of basic amino acids. This chain is Vacuolar basic amino acid transporter 5 (VBA5), found in Saccharomyces cerevisiae (strain ATCC 204508 / S288c) (Baker's yeast).